The sequence spans 427 residues: Trigger factor (427 aa).

In terms of domain architecture, PPIase FKBP-type spans G163–P248.

It belongs to the FKBP-type PPIase family. Tig subfamily.

It is found in the cytoplasm. The catalysed reaction is [protein]-peptidylproline (omega=180) = [protein]-peptidylproline (omega=0). In terms of biological role, involved in protein export. Acts as a chaperone by maintaining the newly synthesized protein in an open conformation. Functions as a peptidyl-prolyl cis-trans isomerase. The sequence is that of Trigger factor from Clostridium botulinum (strain Alaska E43 / Type E3).